A 24-amino-acid polypeptide reads, in one-letter code: Brevinin-1Pa (24 aa).

Cysteine 18 and cysteine 24 are joined by a disulfide.

Expressed by the skin glands.

It localises to the secreted. Antibacterial activity against Gram-positive bacterium S.aureus and Gram-negative bacterium E.coli. Has activity against C.albicans. This Lithobates pipiens (Northern leopard frog) protein is Brevinin-1Pa.